The primary structure comprises 156 residues: Ribosomal RNA large subunit methyltransferase H (156 aa).

S-adenosyl-L-methionine-binding positions include Leu74, Gly105, and 124–129; that span reads LSKLTL.

Belongs to the RNA methyltransferase RlmH family. Homodimer.

The protein localises to the cytoplasm. The enzyme catalyses pseudouridine(1915) in 23S rRNA + S-adenosyl-L-methionine = N(3)-methylpseudouridine(1915) in 23S rRNA + S-adenosyl-L-homocysteine + H(+). In terms of biological role, specifically methylates the pseudouridine at position 1915 (m3Psi1915) in 23S rRNA. The polypeptide is Ribosomal RNA large subunit methyltransferase H (Legionella pneumophila (strain Lens)).